The sequence spans 286 residues: Expansin-B4 (286 aa).

Positions 1 to 24 are cleaved as a signal peptide; that stretch reads MGSLSSLAAAAVFLSLLAVGHCAA. 2 N-linked (GlcNAc...) asparagine glycosylation sites follow: Asn-28 and Asn-44. The 107-residue stretch at 75–181 folds into the Expansin-like EG45 domain; the sequence is GGACGFKHTN…TRVPCEFPGL (107 aa). Cystine bridges form between Cys-78/Cys-106, Cys-109/Cys-176, and Cys-114/Cys-120. In terms of domain architecture, Expansin-like CBD spans 194-281; sequence VYFAVLVEYE…NWRPNTFYRS (88 aa). Asn-257 is a glycosylation site (N-linked (GlcNAc...) asparagine).

This sequence belongs to the expansin family. Expansin B subfamily. Expressed in internodes.

The protein localises to the secreted. The protein resides in the cell wall. Its subcellular location is the membrane. May cause loosening and extension of plant cell walls by disrupting non-covalent bonding between cellulose microfibrils and matrix glucans. No enzymatic activity has been found. May be required for rapid internodal elongation in deepwater rice during submergence. This chain is Expansin-B4 (EXPB4), found in Oryza sativa subsp. japonica (Rice).